The chain runs to 219 residues: Protein YNG1 (219 aa).

Residues 155–204 form a PHD-type; degenerate zinc finger; it reads EVYCFCRNVSYGPMVACDNPACPFEWFHYGCVGLKQAPKGKWYCSKDCKE. Cys158, Cys160, Cys171, Cys176, His182, Cys185, Cys198, and Cys202 together coordinate Zn(2+).

Belongs to the ING family. As to quaternary structure, component of the NuA3 histone acetyltransferase (HAT) complex. The NuA3 HAT complex has 2 functionally distinct forms that participate in transcription. The NuA3a HAT complex is composed of at least NTO1, SAS3, TAF14, YNG1 and EAF6. The NuA3b HAT complex contains an additional subunit, PDP3. Interacts with H3K4me3 and to a lesser extent with H3K4me2.

The protein resides in the nucleus. Its function is as follows. Histone-binding component of the NuA3a histone acetyltransferase complex. Targets the NuA3a HAT complex via histone H3K4me3 to facilitate transcription initiation at promoter regions. SAS3 then acetylates H3K14, leading to transcription initiation at a subset of genes. YNG1 is required for the HAT activity of NuA3 but not for its integrity. Mediates the interaction of SAS3 with nucleosomes. This chain is Protein YNG1 (YNG1), found in Saccharomyces cerevisiae (strain ATCC 204508 / S288c) (Baker's yeast).